Reading from the N-terminus, the 113-residue chain is Ig heavy chain V-III region A4 (113 aa).

The region spanning 1-113 is the Ig-like domain; it reads EVKLEESGGG…YWGQGTLVTV (113 aa). A disulfide bond links cysteine 22 and cysteine 98.

The protein is Ig heavy chain V-III region A4 of Mus musculus (Mouse).